We begin with the raw amino-acid sequence, 376 residues long: Glycerol-3-phosphate acyltransferase 9 (376 aa).

At 1 to 78 (MSSTAGRLVT…SNPPEPWNWN (78 aa)) the chain is on the cytoplasmic side. At Ser-13 the chain carries Phosphoserine. A run of 3 helical transmembrane segments spans residues 79-99 (IYLF…LFPL), 102-122 (FTLA…NALL), and 135-155 (VLVE…VKYH). The Cytoplasmic portion of the chain corresponds to 156-376 (GPRPSIRPKQ…ESILARLEEK (221 aa)). Residues 168-180 (VANHTSMIDFIVL) form a catalytic region. Residues 171–176 (HTSMID) carry the HXXXXD motif motif. Residue 209 to 218 (GCIWFNRSEA) coordinates sn-glycerol 3-phosphate. The tract at residues 242–262 (IFPEGTCVNNNYTVMFKKGAF) is glycerol-3-phosphate binding. Positions 266 to 275 (CTVCPIAIKY) are catalytic. The tract at residues 369 to 373 (ILARL) is endoplasmic reticulum targeting.

It belongs to the 1-acyl-sn-glycerol-3-phosphate acyltransferase family. Self-interacts. Interacts with LPAT2 and LPCAT2. Up-regulated during embryogenesis. Expressed in seedlings, leaves, stems, roots, floral buds, flowers, pollen, and siliques at various developmental stages.

Its subcellular location is the endoplasmic reticulum membrane. The catalysed reaction is sn-glycerol 3-phosphate + an acyl-CoA = a 1-acyl-sn-glycero-3-phosphate + CoA. The protein operates within glycerolipid metabolism; triacylglycerol biosynthesis. Its function is as follows. Essential protein. Required for male and female gametophytes development. Exhibits sn-1 acyltransferase activity with high specificity for acyl-coenzyme A, thus triggering storage lipid biosynthesis and playing an important role in the Kennedy pathway of glycerolipid biosynthesis. Catalyzes triacylglycerol (TAG) accumulation involved in membrane lipid and oil biosynthesis, especially in seeds. Also contributes to the biosynthesis of both polar lipids and TAG in developing leaves, as well as lipid droplet production in developing pollen grains. Seems to not contribute to surface lipid biosynthesis (e.g. waxes and cutin). The protein is Glycerol-3-phosphate acyltransferase 9 of Arabidopsis thaliana (Mouse-ear cress).